Consider the following 183-residue polypeptide: Ribosome-recycling factor (183 aa).

Belongs to the RRF family.

The protein localises to the cytoplasm. Its function is as follows. Responsible for the release of ribosomes from messenger RNA at the termination of protein biosynthesis. May increase the efficiency of translation by recycling ribosomes from one round of translation to another. The protein is Ribosome-recycling factor of Ureaplasma urealyticum serovar 10 (strain ATCC 33699 / Western).